Consider the following 275-residue polypeptide: uncharacterized protein (275 aa).

This is an uncharacterized protein from Acanthamoeba polyphaga mimivirus (APMV).